A 269-amino-acid polypeptide reads, in one-letter code: Cytochrome c oxidase subunit 3 (269 aa).

7 helical membrane passes run 21–41, 45–65, 90–110, 138–160, 167–187, 205–225, and 247–267; these read PWPM…GLTM, IGNM…SVFW, GFLL…WAYF, PLLN…HALI, ALSG…CQYI, FYAG…MLII, and ILYC…FYWW.

It belongs to the cytochrome c oxidase subunit 3 family. In terms of assembly, component of the cytochrome c oxidase (complex IV, CIV), a multisubunit enzyme composed of a catalytic core of 3 subunits and several supernumerary subunits. The complex exists as a monomer or a dimer and forms supercomplexes (SCs) in the inner mitochondrial membrane with ubiquinol-cytochrome c oxidoreductase (cytochrome b-c1 complex, complex III, CIII).

The protein localises to the mitochondrion inner membrane. The enzyme catalyses 4 Fe(II)-[cytochrome c] + O2 + 8 H(+)(in) = 4 Fe(III)-[cytochrome c] + 2 H2O + 4 H(+)(out). In terms of biological role, component of the cytochrome c oxidase, the last enzyme in the mitochondrial electron transport chain which drives oxidative phosphorylation. The respiratory chain contains 3 multisubunit complexes succinate dehydrogenase (complex II, CII), ubiquinol-cytochrome c oxidoreductase (cytochrome b-c1 complex, complex III, CIII) and cytochrome c oxidase (complex IV, CIV), that cooperate to transfer electrons derived from NADH and succinate to molecular oxygen, creating an electrochemical gradient over the inner membrane that drives transmembrane transport and the ATP synthase. Cytochrome c oxidase is the component of the respiratory chain that catalyzes the reduction of oxygen to water. Electrons originating from reduced cytochrome c in the intermembrane space (IMS) are transferred via the dinuclear copper A center (CU(A)) of subunit 2 and heme A of subunit 1 to the active site in subunit 1, a binuclear center (BNC) formed by heme A3 and copper B (CU(B)). The BNC reduces molecular oxygen to 2 water molecules using 4 electrons from cytochrome c in the IMS and 4 protons from the mitochondrial matrix. In Candida glabrata (strain ATCC 2001 / BCRC 20586 / JCM 3761 / NBRC 0622 / NRRL Y-65 / CBS 138) (Yeast), this protein is Cytochrome c oxidase subunit 3 (COX3).